The following is a 138-amino-acid chain: Large ribosomal subunit protein uL16 (138 aa).

The segment covering 1-13 (MLQPARRKYRKEQ) has biased composition (basic residues). The tract at residues 1 to 22 (MLQPARRKYRKEQKGRNTGVAT) is disordered.

This sequence belongs to the universal ribosomal protein uL16 family. As to quaternary structure, part of the 50S ribosomal subunit.

Binds 23S rRNA and is also seen to make contacts with the A and possibly P site tRNAs. The polypeptide is Large ribosomal subunit protein uL16 (Paracidovorax citrulli (strain AAC00-1) (Acidovorax citrulli)).